We begin with the raw amino-acid sequence, 406 residues long: E3 ubiquitin-protein ligase RING1 (406 aa).

Position 24 is a phosphothreonine (T24). The interval 30–234 is necessary for transcriptional repression; the sequence is MDGTEIAVSP…GGAGSEDSGD (205 aa). A Phosphoserine modification is found at S38. The RING-type zinc finger occupies 48–88; that stretch reads CPICLDMLKNTMTTKECLHRFCSDCIVTALRSGNKECPTCR. S140, S187, and S190 each carry phosphoserine. Disordered regions lie at residues 151-263 and 309-354; these read HRAQ…GEIE and QQQE…PSLE. The segment covering 175-187 has biased composition (acidic residues); it reads EPGEGEGDGEDVS. The Nuclear localization signal signature appears at 201 to 204; sequence KRPR. The segment covering 214–228 has biased composition (gly residues); the sequence is GTGGGAAGGACGGAG. Residue T215 is modified to Phosphothreonine. Phosphoserine occurs at positions 229 and 232. The interval 230 to 406 is necessary for interaction with CBX2; sequence EDSGDRGGTL…LCYAPTKDPK (177 aa). The span at 235 to 244 shows a compositional bias: gly residues; it reads RGGTLGGGTL. Residues 246–258 are compositionally biased toward pro residues; the sequence is PPSPPGAPSPPEP. Phosphoserine is present on residues S248 and S254. The segment covering 317 to 343 has biased composition (gly residues); the sequence is GGPGGGASDTGGPDGGGGERGVAGGGE.

As to quaternary structure, component of chromatin-associated Polycomb (PcG) complexes. Part of the E2F6.com-1 complex in G0 phase composed of E2F6, MGA, MAX, TFDP1, CBX3, BAT8, EUHMTASE1, RING1, RNF2/RING2 MBLR, L3MBTL2 and YAF2. Interacts with CBX2 and PCGF6. Component of a PRC1-like complex. Component of repressive BCOR complex containing Polycomb group subcomplex at least composed of RYBP, PCGF1, BCOR and RNF2/RING2. Interacts with PHC2, PCGF2, RNF2; CBX6, CBX7 and CBX8. Interacts with BMI1. Interacts with MN1. Interacts with USP26.

Its subcellular location is the nucleus speckle. The catalysed reaction is S-ubiquitinyl-[E2 ubiquitin-conjugating enzyme]-L-cysteine + [acceptor protein]-L-lysine = [E2 ubiquitin-conjugating enzyme]-L-cysteine + N(6)-ubiquitinyl-[acceptor protein]-L-lysine.. It functions in the pathway protein modification; protein ubiquitination. Constitutes one of the E3 ubiquitin-protein ligases that mediate monoubiquitination of 'Lys-119' of histone H2A, thereby playing a central role in histone code and gene regulation. H2A 'Lys-119' ubiquitination gives a specific tag for epigenetic transcriptional repression and participates in X chromosome inactivation of female mammals. Essential component of a Polycomb group (PcG) multiprotein PRC1-like complex, a complex class required to maintain the transcriptionally repressive state of many genes, including Hox genes, throughout development. PcG PRC1 complex acts via chromatin remodeling and modification of histones, rendering chromatin heritably changed in its expressibility. Compared to RNF2/RING2, it does not have the main E3 ubiquitin ligase activity on histone H2A, and it may rather act as a modulator of RNF2/RING2 activity. This is E3 ubiquitin-protein ligase RING1 from Mus musculus (Mouse).